Here is a 152-residue protein sequence, read N- to C-terminus: Small ribosomal subunit protein uS15 (152 aa).

Residues methionine 1–arginine 16 are compositionally biased toward basic residues. Residues methionine 1–serine 21 are disordered.

This sequence belongs to the universal ribosomal protein uS15 family. As to quaternary structure, part of the 30S ribosomal subunit.

In Archaeoglobus fulgidus (strain ATCC 49558 / DSM 4304 / JCM 9628 / NBRC 100126 / VC-16), this protein is Small ribosomal subunit protein uS15.